The primary structure comprises 439 residues: Prenyltransferase iacE (439 aa).

Residues 88–89 (WI), E97, R112, K198, Y200, R271, K273, and Y275 contribute to the substrate site.

Belongs to the tryptophan dimethylallyltransferase family.

It carries out the reaction siccayne + dimethylallyl diphosphate = pestalodiol + diphosphate. It functions in the pathway secondary metabolite biosynthesis. Prenyltransferase; part of the gene cluster that mediates the biosynthesis of iso-A82775C, a enylepoxycyclohexane and biosynthetic precursor of the chloropestolide anticancer natural products. Within the cluster, the prenyltransferase iacE prenylates siccayne to generate pestalodiol E, using dimethylallyl diphosphate (DMAPP) as cosubstrate. The probable oxidoreductase iacF is then involved in the epoxidation of pestalodiol F to pestalodiol F, which is further converted to pestalofone A by the short-chain dehydrogenase/reductase iacG. Iso-A82775C is subsequently generated from pestalofone A by the short-chain dehydrogenase/reductase iacC. Iso-A82775C is further condensed with maldoxin via a Diels-Alder reaction to produce the anticancer natural products chloropestolides A to E. In Pestalotiopsis fici (strain W106-1 / CGMCC3.15140), this protein is Prenyltransferase iacE.